The following is a 397-amino-acid chain: COP9 signalosome complex subunit 4 (397 aa).

Met-1 is modified (N-acetylmethionine). The PCI domain maps to 197 to 365 (ALRYYGISQI…AVIHFEDDVE (169 aa)).

It belongs to the CSN4 family. In terms of assembly, component of the CSN complex, probably composed of CSN1, CSN2, CSN3, CSN4, CSN5 (CSN5A or CSN5B), CSN6 (CSN6A or CSN6B), CSN7 and CSN8. Interacts with itself. In the complex, it is located in the center and probably interacts directly with CSN1, CSN2, CSN3, CSN4, CSN5A or CSN5B, CSN6A or CSN6B, CSN7 and CSN8. Interacts with COP10. Binds to the translation initiation factors TIF3E1.

It localises to the cytoplasm. Its subcellular location is the nucleus. Functionally, component of the COP9 signalosome complex (CSN), a complex involved in various cellular and developmental processes such as photomorphogenesis and auxin and jasmonate responses. The CSN complex is an essential regulator of the ubiquitin (Ubl) conjugation pathway by mediating the deneddylation of the cullin subunits of SCF-type E3 ligase complexes, leading to decrease the Ubl ligase activity of SCF. It is involved in repression of photomorphogenesis in darkness by regulating the activity of COP1-containing Ubl ligase complexes. The complex is also required for degradation of IAA6 by regulating the activity of the Ubl ligase SCF-TIR complex. The chain is COP9 signalosome complex subunit 4 (CSN4) from Arabidopsis thaliana (Mouse-ear cress).